A 381-amino-acid polypeptide reads, in one-letter code: Phospholipid scramblase family protein C343.06c (381 aa).

The disordered stretch occupies residues 336-369 (QEILKNDQETTPSTNDSSSETKSPFLSDADLDQQ). The segment covering 344–359 (ETTPSTNDSSSETKSP) has biased composition (polar residues).

This sequence belongs to the phospholipid scramblase family.

It localises to the mitochondrion. The chain is Phospholipid scramblase family protein C343.06c from Schizosaccharomyces pombe (strain 972 / ATCC 24843) (Fission yeast).